Consider the following 247-residue polypeptide: UPF0280 protein MmarC6_1437 (247 aa).

It belongs to the UPF0280 family.

The sequence is that of UPF0280 protein MmarC6_1437 from Methanococcus maripaludis (strain C6 / ATCC BAA-1332).